Reading from the N-terminus, the 429-residue chain is MSKSLQAIRGMNDILPEQSPLWRYFEGTVAGLLDTYGYSQIRTPIVEFTELFKRSIGEVTDIVEKEMYTFEDRNGDSLTLRPEGTAACVRAVLEHGITGNGQVQKLWYIGQMFRHERPQKGRYRQFHQIGVEVFNLDGPDIDAELIMLTWRLWGLLGIQDAVKLELNSLGTSEARARYRDALVEFLSARLEQLDEDSQRRLKSNPLRILDSKDQNTQAVLVGAPKLEDYLDEESRVHFEGLKARLDAAGIPFVINTKLVRGLDYYSKTVFEWVTDKLGAQGTVCAGGRYDGLVEQMGGKPTTGVGFAMGIERLILLLETLGKVPESISRQIDVYLCAFGEQAELAGLRLSEGLRDRLPGLRLAVNAGGGSFKSQFKKADKSGALFALILGDDELAKQEIGLKPLRGQGEQQNIAWDALAEHLETAIAQA.

Belongs to the class-II aminoacyl-tRNA synthetase family. Homodimer.

The protein resides in the cytoplasm. It carries out the reaction tRNA(His) + L-histidine + ATP = L-histidyl-tRNA(His) + AMP + diphosphate + H(+). The polypeptide is Histidine--tRNA ligase (Pseudomonas putida (strain GB-1)).